The following is a 610-amino-acid chain: Solute carrier family 2, facilitated glucose transporter member 12 (610 aa).

Topologically, residues 1-49 (MDAPEESIRMTSDPQSKIYVQNPDTHIHLEQGPSAKSGNGRALVLCSVS) are cytoplasmic. The chain crosses the membrane as a helical span at residues 50-70 (VACLSGLLMGYEMSLISGALL). At 71–84 (QLRDVLTLSCPEQE) the chain is on the extracellular side. A helical transmembrane segment spans residues 85–105 (QVVGSLLLGAFLLSLGGGTIL). Residues 106–118 (DHYGRRFTIILTA) are Cytoplasmic-facing. Residues 119–139 (LLCVLGTLLSVCVVSFWALVV) traverse the membrane as a helical segment. Over 140–141 (GR) the chain is Extracellular. A helical membrane pass occupies residues 142–162 (MLVGMSVALSGTASCLYAAEV). The Cytoplasmic portion of the chain corresponds to 163–176 (APAAWRGRCVCVYE). The chain crosses the membrane as a helical span at residues 177-197 (LMVVLGMLLGFGLSWAFAGVP). Residues 198–201 (DGWR) are Extracellular-facing. The helical transmembrane segment at 202 to 222 (FTFGGALLPALLQAGVMPLLP) threads the bilayer. Residues 223-286 (DSPRFLLAQQ…FQSRDNMLQR (64 aa)) are Cytoplasmic-facing. Residues 287 to 307 (LLVGAALVFLQQATGQPNILA) traverse the membrane as a helical segment. The Extracellular portion of the chain corresponds to 308 to 325 (YASTVLSSVGFHGNEAAT). A helical membrane pass occupies residues 326–346 (LASTGFGVVKVGGTIPAIFLV). At 347–353 (DKVGPKA) the chain is on the cytoplasmic side. Residues 354 to 374 (LLCVGVVVMMLSTATLGAITM) traverse the membrane as a helical segment. Topologically, residues 375–475 (QSRTHVSSLC…LHEVSPSLKW (101 aa)) are extracellular. 3 N-linked (GlcNAc...) asparagine glycosylation sites follow: N392, N429, and N438. Residues 476 to 496 (ISLVSLLVYVAGFSISLGPMV) form a helical membrane-spanning segment. The Cytoplasmic segment spans residues 497–511 (HVVLSAIFPTGIRGK). The chain crosses the membrane as a helical span at residues 512–532 (AVSVISAFNWATNLLISMTFL). The Extracellular segment spans residues 533–542 (TLTERIGLPT). The chain crosses the membrane as a helical span at residues 543–563 (VIFSYSAMSFLLVVFVIVFVP). Residues 564–610 (ETKGRSLEQISKELAMKNHLRGTLLCHRRKHKATAQPSQEEKALATV) lie on the Cytoplasmic side of the membrane.

This sequence belongs to the major facilitator superfamily. Sugar transporter (TC 2.A.1.1) family. Glucose transporter subfamily. In terms of tissue distribution, expressed in the main insulin-sensitive tissues, such as cardiac muscle, skeletal muscle and adipose tissue.

Its subcellular location is the cell membrane. The protein localises to the endomembrane system. The protein resides in the cytoplasm. It localises to the perinuclear region. It carries out the reaction D-glucose(out) = D-glucose(in). Its function is as follows. Insulin-regulated facilitative glucose transporter. This chain is Solute carrier family 2, facilitated glucose transporter member 12, found in Danio rerio (Zebrafish).